Here is an 81-residue protein sequence, read N- to C-terminus: UPF0181 protein Spro_2806 (81 aa).

The segment at Glu-43–Tyr-81 is disordered. Acidic residues-rich tracts occupy residues Phe-54–Tyr-63 and Gln-70–Tyr-81.

This sequence belongs to the UPF0181 family.

This is UPF0181 protein Spro_2806 from Serratia proteamaculans (strain 568).